A 220-amino-acid polypeptide reads, in one-letter code: Aspartic protease inhibitor 4 (220 aa).

A signal peptide spans 1-23; that stretch reads MMKCLFLLCLCLLPILVFSSTFT. Positions 24-32 are excised as a propeptide; sequence SQNPINLPS. The Vacuolar targeting signal motif lies at 26–31; it reads NPINLP. An N-linked (GlcNAc...) asparagine glycan is attached at Asn51. 2 disulfides stabilise this stretch: Cys80/Cys125 and Cys174/Cys185.

It belongs to the protease inhibitor I3 (leguminous Kunitz-type inhibitor) family. In terms of tissue distribution, tubers.

It is found in the vacuole. Its function is as follows. Inhibits tightly cathepsin D (aspartic protease) and weakly trypsin (serine protease). May protect the plant by inhibiting proteases of invading organisms. This Solanum tuberosum (Potato) protein is Aspartic protease inhibitor 4.